The sequence spans 88 residues: Augerpeptide Hhe9a (88 aa).

The signal sequence occupies residues 1-21 (MMTKTGLVLLFAFLLVFPVSS). Positions 22-49 (LPMDAEAGHARLEMDKRDAGNEAWTRLL) are excised as a propeptide. Disulfide bonds link Cys-56–Cys-71, Cys-61–Cys-73, and Cys-67–Cys-86.

In terms of tissue distribution, expressed by the venom duct.

Its subcellular location is the secreted. The protein is Augerpeptide Hhe9a of Hastula hectica (Sea snail).